The chain runs to 320 residues: D-alanine--D-alanine ligase (320 aa).

The ATP-grasp domain occupies 101–317 (KMIFQGAGLP…FSELVCKILS (217 aa)). Residue 148–203 (INQLGLPLIVKPSREGSSFGMTKVEHLDQLDDALKKAWHYDEEILVEKWHFGTELT) coordinates ATP. Asp271, Glu284, and Asn286 together coordinate Mg(2+).

It belongs to the D-alanine--D-alanine ligase family. Requires Mg(2+) as cofactor. Mn(2+) serves as cofactor.

The protein localises to the cytoplasm. The catalysed reaction is 2 D-alanine + ATP = D-alanyl-D-alanine + ADP + phosphate + H(+). Its pathway is cell wall biogenesis; peptidoglycan biosynthesis. Functionally, cell wall formation. The chain is D-alanine--D-alanine ligase from Hamiltonella defensa subsp. Acyrthosiphon pisum (strain 5AT).